An 876-amino-acid polypeptide reads, in one-letter code: MSNERYNARESEPKWQAKWDEAKIFATRNDDLRKKYYVLEMFPYPSGRIHMGHVRNYTMGDVVARTMRARGYNVLHPMGWDAFGLPAENAAIERKIAPKAWTYDNIAAMKKQLQTMGLSLDWAREFATCDPSYYKHQQKMFLDFLKVGLVEREKRKLNWDPVDMTVLANEQVIDGRGWRSGAVVELREMNQWVFKITKYAQELLDALDTLDRWPDKVRLMQRNWIGRSEGLMVRFALDSATTPAGETELKIFTTRPDTLFGAKFMAIAADHPLAQAAAAKDPKVAAFIDDCKKRGTAQAEIDTAEKQGIDTGIRAMHPFDPSWKLPVYVANFVLMEYGTGAIFGCPAHDQRDLDFVNKYQLGNTPVVCPEGQDPASFVITDTAYDGDGRMINSRFLDGMTIVEAKEEVAKRLETAQLGGAPVGERKVNFRLRDWGISRQRYWGCPIPIIHCPTCDVVPVPDADLPVVLPEDVSFDKPGNALDHHPTWKHVTCPKCGGKAVRETDTMDTFVDSSWYFARFTDPWNTEAPTTPDVVNRMMPVDQYIGGVEHAILHLLYSRFFTRAMKAAGHIDIQHDEPFAGLFTQGMVVHETYRKADGHFASPAEISITVEGDTRRATLLDGGSPVEIGPIEKMSKSKRNTVDPDDIIGTYGADTARWFMLSDSPPDRDVIWSEEGVKGASRFVQRLWRMVNDAAPIAASAPAERPASFGADALTLRKAAHGALDKVLSGIERLAFNVSLAHIREFSNTLGDALARSQTPSPDLAWAIRESTVILVQLFHPMMPHLAEECWTVLGQTGLVSEALWPQIEPDLLVEDSITLPVQVNGKKRGEVTVPRDAPTSEIEAAVLALDAVKQALGDKPVRKVIVVPQRIVNVVG.

Positions 43–53 (PYPSGRIHMGH) match the 'HIGH' region motif. Positions 632-636 (KMSKS) match the 'KMSKS' region motif. K635 serves as a coordination point for ATP.

It belongs to the class-I aminoacyl-tRNA synthetase family.

It is found in the cytoplasm. It catalyses the reaction tRNA(Leu) + L-leucine + ATP = L-leucyl-tRNA(Leu) + AMP + diphosphate. The sequence is that of Leucine--tRNA ligase from Rhodopseudomonas palustris (strain TIE-1).